Reading from the N-terminus, the 753-residue chain is LON peptidase N-terminal domain and RING finger protein 3 (753 aa).

A disordered region spans residues 17–57; it reads GSNNLELAEPEEPGTSAAAGQSAAHPEEVTPEGSQALGAQE. One copy of the TPR 1 repeat lies at 72-105; sequence CKVLLTQADALASEGHLREALEVYRQLSERQQLV. The RING-type 1 zinc finger occupies 159 to 197; it reads CKKCHGFLSDPVSLWCGHTFCKLCLERGRAADRRCALCG. TPR repeat units lie at residues 244–277, 279–311, and 313–345; these read ASQLRHEGNRLFREHQVEAALLKYNEAVRLAPND, LLYSNRSQIYFTLESHEDALHDAEIACKLRPMG, and KAHFRKAQALATLGKVKEALKEFLYCVSLDGKN. Residues 351 to 450 are disordered; sequence EAQRENLELP…QGAKPDLSNP (100 aa). Residues 363 to 382 are compositionally biased toward low complexity; sequence SNQEGAAAAEESSSLANSAQ. Positions 386–413 are enriched in basic and acidic residues; sequence SSKEDRKKDQEGEDRDAASVRTGKCQEK. An RING-type 2 zinc finger spans residues 461–499; sequence CSLCMRLFYEPVTTPCGHTFCLKCLERCLDHNAKCPLCK. Residues 540 to 749 enclose the Lon N-terminal domain; it reads MEELSNLNKN…GIRRILAFIS (210 aa).

This is LON peptidase N-terminal domain and RING finger protein 3 (Lonrf3) from Mus musculus (Mouse).